The chain runs to 1080 residues: Headcase protein (1080 aa).

7 disordered regions span residues 1 to 27 (MAPR…LQQQ), 181 to 277 (IYLN…GNNG), 310 to 335 (SLSS…ISVS), 655 to 693 (PLES…QPPK), 798 to 826 (SKYQ…QHAT), 891 to 916 (SGCS…DGSK), and 940 to 974 (QRQQ…NGWS). Residues 181–197 (IYLNGSGNRPTLANGSL) show a composition bias toward polar residues. Positions 218-228 (NGGGGGGGAGV) are enriched in gly residues. Over residues 232 to 251 (TKTPLSNNNGNSYAGLTPNP) the composition is skewed to polar residues. The span at 263-277 (NNGNTASNGSSGNNG) shows a compositional bias: low complexity. The span at 663 to 688 (GATTTQVPNAQGSPTASGCSSNTIAS) shows a compositional bias: polar residues. Residues 801-826 (QQQQHQQQQQQRQQQHNLQPQQQHAT) show a composition bias toward low complexity. Residues 900-913 (QPSLSPTASSNGND) are compositionally biased toward polar residues. A compositionally biased stretch (low complexity) spans 941-974 (RQQPPQQQVPQQQPHAASPTASLTSSSSSSNGWS).

Expressed in all imaginal cells of the embryo and larvae. Expressed in a subset of tracheal fusion cells from stage 14 to the end of embryogenesis in metameres 2-9, lateral trunk and ventral anastomoses.

The protein localises to the cytoplasm. Required for imaginal cell differentiation, may be involved in hormonal responsiveness during metamorphosis. Involved in an inhibitory signaling mechanism to determine the number of cells that will form unicellular sprouts in the trachea. Regulated by transcription factor esg. The longer hdc protein is completely functional and the shorter protein carries some function. In Drosophila melanogaster (Fruit fly), this protein is Headcase protein.